We begin with the raw amino-acid sequence, 304 residues long: Homoserine O-acetyltransferase (304 aa).

The active-site Acyl-thioester intermediate is the Cys142. Substrate-binding residues include Lys163 and Ser191. Residue His234 is the Proton acceptor of the active site. Glu236 is a catalytic residue. Arg248 is a binding site for substrate.

Belongs to the MetA family.

The protein localises to the cytoplasm. The catalysed reaction is L-homoserine + acetyl-CoA = O-acetyl-L-homoserine + CoA. Its pathway is amino-acid biosynthesis; L-methionine biosynthesis via de novo pathway; O-acetyl-L-homoserine from L-homoserine: step 1/1. In terms of biological role, transfers an acetyl group from acetyl-CoA to L-homoserine, forming acetyl-L-homoserine. The sequence is that of Homoserine O-acetyltransferase from Thermotoga neapolitana (strain ATCC 49049 / DSM 4359 / NBRC 107923 / NS-E).